We begin with the raw amino-acid sequence, 851 residues long: Envelope glycoprotein gp160 (851 aa).

Positions 1 to 31 (MKVMGIQRNCQQWWIWGILGFWMLMICNGMG) are cleaved as a signal peptide. Residues 32 to 672 (NLWVTVYYGV…ITNWLWYIKI (641 aa)) lie on the Extracellular side of the membrane. Cys-53 and Cys-73 are joined by a disulfide. Asn-87, Asn-135, Asn-141, Asn-153, Asn-157, Asn-183, and Asn-194 each carry an N-linked (GlcNAc...) asparagine; by host glycan. Intrachain disulfides connect Cys-118–Cys-202, Cys-125–Cys-193, Cys-130–Cys-154, Cys-215–Cys-244, and Cys-225–Cys-236. Residues 130–153 (CNAIKNNTKVTNNSINSANDEMKN) are V1. The interval 154–193 (CSFNITTELRDKKRKAYALFYKLDIVPLNNGSTDYRLINC) is V2. 8 N-linked (GlcNAc...) asparagine; by host glycosylation sites follow: Asn-238, Asn-259, Asn-273, Asn-286, Asn-298, Asn-328, Asn-335, and Asn-351. The segment at 293–326 (CTRPSNNTRESIRIGPGQTFYATGDIIGDIRQAH) is V3. Cys-293 and Cys-327 are joined by a disulfide. The tract at residues 359–369 (SSGGDLEITTH) is CD4-binding loop. Disulfide bonds link Cys-373–Cys-433 and Cys-380–Cys-406. Residues 380 to 406 (CNTSNLFNSTKLELFNSSTNLNITLQC) form a V4 region. 5 N-linked (GlcNAc...) asparagine; by host glycosylation sites follow: Asn-381, Asn-387, Asn-395, Asn-401, and Asn-436. 2 V5 regions span residues 449 to 460 (EPHSTKEIFRPE) and 451 to 460 (HSTKEIFRPE). The tract at residues 501–520 (AALGALFLGFLGAAGSTMGA) is fusion peptide. Residues 562–580 (KQLQTRVLAIERHLRDQQL) form an immunosuppression region. Cys-586 and Cys-592 are joined by a disulfide. N-linked (GlcNAc...) asparagine; by host glycosylation is found at Asn-599, Asn-604, Asn-613, Asn-625, and Asn-662. Residues 621–655 (REISNYTDIIYNLLEVSQNQQDKNEKDLLALDKWE) are a coiled coil. Residues 650-671 (ALDKWENLWNWFNITNWLWYIK) form an MPER; binding to GalCer region. Residues 673 to 693 (FIMIVGGVIGLRIIFAVLSIV) traverse the membrane as a helical segment. Topologically, residues 694–851 (NRVRQGYSPL…IRQGLEAALQ (158 aa)) are cytoplasmic. A YXXL motif; contains endocytosis signal motif is present at residues 700–703 (YSPL). Cys-752 carries the S-palmitoyl cysteine; by host lipid modification.

It belongs to the HIV-1 env protein family. In terms of assembly, the mature envelope protein (Env) consists of a homotrimer of non-covalently associated gp120-gp41 heterodimers. The resulting complex protrudes from the virus surface as a spike. There seems to be as few as 10 spikes on the average virion. Interacts with host CD4, CCR5 and CXCR4. Gp120 also interacts with the C-type lectins CD209/DC-SIGN and CLEC4M/DC-SIGNR (collectively referred to as DC-SIGN(R)). Gp120 and gp41 interact with GalCer. Gp120 interacts with host ITGA4/ITGB7 complex; on CD4+ T-cells, this interaction results in rapid activation of integrin ITGAL/LFA-1, which facilitates efficient cell-to-cell spreading of HIV-1. Gp120 interacts with cell-associated heparan sulfate; this interaction increases virus infectivity on permissive cells and may be involved in infection of CD4- cells. As to quaternary structure, the mature envelope protein (Env) consists of a homotrimer of non-covalently associated gp120-gp41 heterodimers. The resulting complex protrudes from the virus surface as a spike. There seems to be as few as 10 spikes on the average virion. Highly glycosylated by host. The high number of glycan on the protein is reffered to as 'glycan shield' because it contributes to hide protein sequence from adaptive immune system. In terms of processing, palmitoylation of the transmembrane protein and of Env polyprotein (prior to its proteolytic cleavage) is essential for their association with host cell membrane lipid rafts. Palmitoylation is therefore required for envelope trafficking to classical lipid rafts, but not for viral replication. Post-translationally, specific enzymatic cleavages in vivo yield mature proteins. Envelope glycoproteins are synthesized as an inactive precursor that is heavily N-glycosylated and processed likely by host cell furin in the Golgi to yield the mature SU and TM proteins. The cleavage site between SU and TM requires the minimal sequence [KR]-X-[KR]-R. About 2 of the 9 disulfide bonds of gp41 are reduced by P4HB/PDI, following binding to CD4 receptor.

Its subcellular location is the virion membrane. It is found in the host cell membrane. The protein localises to the host endosome membrane. In terms of biological role, oligomerizes in the host endoplasmic reticulum into predominantly trimers. In a second time, gp160 transits in the host Golgi, where glycosylation is completed. The precursor is then proteolytically cleaved in the trans-Golgi and thereby activated by cellular furin or furin-like proteases to produce gp120 and gp41. Attaches the virus to the host lymphoid cell by binding to the primary receptor CD4. This interaction induces a structural rearrangement creating a high affinity binding site for a chemokine coreceptor like CXCR4 and/or CCR5. Acts as a ligand for CD209/DC-SIGN and CLEC4M/DC-SIGNR, which are respectively found on dendritic cells (DCs), and on endothelial cells of liver sinusoids and lymph node sinuses. These interactions allow capture of viral particles at mucosal surfaces by these cells and subsequent transmission to permissive cells. HIV subverts the migration properties of dendritic cells to gain access to CD4+ T-cells in lymph nodes. Virus transmission to permissive T-cells occurs either in trans (without DCs infection, through viral capture and transmission), or in cis (following DCs productive infection, through the usual CD4-gp120 interaction), thereby inducing a robust infection. In trans infection, bound virions remain infectious over days and it is proposed that they are not degraded, but protected in non-lysosomal acidic organelles within the DCs close to the cell membrane thus contributing to the viral infectious potential during DCs' migration from the periphery to the lymphoid tissues. On arrival at lymphoid tissues, intact virions recycle back to DCs' cell surface allowing virus transmission to CD4+ T-cells. Functionally, acts as a class I viral fusion protein. Under the current model, the protein has at least 3 conformational states: pre-fusion native state, pre-hairpin intermediate state, and post-fusion hairpin state. During fusion of viral and target intracellular membranes, the coiled coil regions (heptad repeats) assume a trimer-of-hairpins structure, positioning the fusion peptide in close proximity to the C-terminal region of the ectodomain. The formation of this structure appears to drive apposition and subsequent fusion of viral and target cell membranes. Complete fusion occurs in host cell endosomes and is dynamin-dependent, however some lipid transfer might occur at the plasma membrane. The virus undergoes clathrin-dependent internalization long before endosomal fusion, thus minimizing the surface exposure of conserved viral epitopes during fusion and reducing the efficacy of inhibitors targeting these epitopes. Membranes fusion leads to delivery of the nucleocapsid into the cytoplasm. This Homo sapiens (Human) protein is Envelope glycoprotein gp160.